The primary structure comprises 555 residues: Urocanate hydratase (555 aa).

NAD(+)-binding positions include 51–52, Q129, 175–177, E195, 262–266, 272–273, and Y321; these read GG, GMG, QTSAH, and YL. C409 is a catalytic residue. Residue G491 coordinates NAD(+).

Belongs to the urocanase family. NAD(+) is required as a cofactor.

The protein resides in the cytoplasm. The enzyme catalyses 4-imidazolone-5-propanoate = trans-urocanate + H2O. It participates in amino-acid degradation; L-histidine degradation into L-glutamate; N-formimidoyl-L-glutamate from L-histidine: step 2/3. In terms of biological role, catalyzes the conversion of urocanate to 4-imidazolone-5-propionate. The chain is Urocanate hydratase from Xanthomonas campestris pv. campestris (strain ATCC 33913 / DSM 3586 / NCPPB 528 / LMG 568 / P 25).